The following is a 504-amino-acid chain: Anaerobic nitric oxide reductase transcription regulator NorR (504 aa).

The residue at position 57 (aspartate 57) is a 4-aspartylphosphate. In terms of domain architecture, Sigma-54 factor interaction spans methionine 187–valine 416. Residues glycine 215 to glutamate 222 and alanine 278 to glutamate 287 each bind ATP. The H-T-H motif DNA-binding region spans tryptophan 479 to lysine 498.

Its pathway is nitrogen metabolism; nitric oxide reduction. Required for the expression of anaerobic nitric oxide (NO) reductase, acts as a transcriptional activator for at least the norVW operon. Activation also requires sigma-54. This Escherichia coli O81 (strain ED1a) protein is Anaerobic nitric oxide reductase transcription regulator NorR.